A 36-amino-acid chain; its full sequence is Histone H1-like protein EM5 (36 aa).

Residues 1–36 enclose the H15 domain; that stretch reads MITAAVGALKERGGSSRQAILKYIQANFKVQANPAA.

It belongs to the histone H1/H5 family. Sperm.

The protein localises to the nucleus. It is found in the chromosome. This chain is Histone H1-like protein EM5, found in Ensis minor (Razor shell).